The chain runs to 443 residues: Protein AknT (443 aa).

It belongs to the cytochrome P450 family.

Its function is as follows. Involved in the biosynthesis of the anthracycline antitumor agent aclacinomycin A. AknT is required for the glycosylation of aklavinone aglycone by AknS to yield aclacinomycin T (rhodosaminyl-aklavinone). In Streptomyces galilaeus, this protein is Protein AknT.